A 170-amino-acid chain; its full sequence is Phosphopantetheine adenylyltransferase (170 aa).

Threonine 14 serves as a coordination point for substrate. ATP contacts are provided by residues 14–15 (TF) and histidine 22. Residues lysine 46, leucine 78, and arginine 92 each coordinate substrate. ATP-binding positions include 93-95 (GLR), glutamate 103, and 128-134 (WLYISST).

Belongs to the bacterial CoaD family. In terms of assembly, homohexamer. The cofactor is Mg(2+).

The protein resides in the cytoplasm. The enzyme catalyses (R)-4'-phosphopantetheine + ATP + H(+) = 3'-dephospho-CoA + diphosphate. It participates in cofactor biosynthesis; coenzyme A biosynthesis; CoA from (R)-pantothenate: step 4/5. Reversibly transfers an adenylyl group from ATP to 4'-phosphopantetheine, yielding dephospho-CoA (dPCoA) and pyrophosphate. This chain is Phosphopantetheine adenylyltransferase, found in Oleidesulfovibrio alaskensis (strain ATCC BAA-1058 / DSM 17464 / G20) (Desulfovibrio alaskensis).